We begin with the raw amino-acid sequence, 122 residues long: uncharacterized protein (122 aa).

This is an uncharacterized protein from Mycoplasma pneumoniae (strain ATCC 29342 / M129 / Subtype 1) (Mycoplasmoides pneumoniae).